The primary structure comprises 1097 residues: Protein toll (1097 aa).

Positions M1 to A27 are cleaved as a signal peptide. The Extracellular segment spans residues S28 to I807. 3 disulfide bridges follow: C34-C45, C43-C56, and C79-C107. 3 N-linked (GlcNAc...) asparagine glycosylation sites follow: N80, N140, and N175. 15 LRR repeats span residues N175 to D195, N198 to K219, K222 to G243, S246 to H267, N270 to H291, H294 to L314, E320 to H340, Q343 to H364, N367 to H388, N391 to N412, N415 to S436, G439 to M460, G474 to T495, Q498 to S521, and N523 to H544. N235 is a glycosylation site (N-linked (GlcNAc...) asparagine). N-linked (GlcNAc...) asparagine glycosylation is found at N270 and N275. N346 carries N-linked (GlcNAc...) asparagine glycosylation. N391 carries an N-linked (GlcNAc...) asparagine glycan. 3 N-linked (GlcNAc...) asparagine glycosylation sites follow: N482, N508, and N528. Positions N561–L620 constitute an LRRCT 1 domain. Disulfide bonds link C565–C597, C567–C618, C631–C637, and C635–C650. The 42-residue stretch at F622–N663 folds into the LRRNT domain. 6 N-linked (GlcNAc...) asparagine glycosylation sites follow: N654, N677, N703, N715, N730, and N738. LRR repeat units follow at residues Q669–G690, S693–P713, and N715–N738. Positions N751 to A801 constitute an LRRCT 2 domain. 2 disulfides stabilise this stretch: C755–C781 and C757–C799. A helical membrane pass occupies residues A808–Y828. The Cytoplasmic portion of the chain corresponds to K829–V1097. One can recognise a TIR domain in the interval K857–L993.

This sequence belongs to the Toll-like receptor family. In terms of assembly, in the absence of ligand, forms a low-affinity disulfide-linked homodimer. In the presence of ligand, crystal structures show one Tl molecule bound to a spaetzle C-106 homodimer. However, the active complex probably consists of two Tl molecules bound to a spaetzle C-106 homodimer. This is supported by in vitro experiments which also show binding of the spaetzle C-106 dimer to 2 Tl receptors. Ligand binding induces conformational changes in the extracellular domain of Tl. This may enable a secondary homodimerization interface at the C-terminus of the Tl extracellular domain. As to expression, in early embryos, concentrated in the pseudocleavage furrows that form transiently between nuclei before cellularization and in the cleavage furrows during cellularization (at protein level). Later, found on cells in the mesectoderm, stomodeum, proctodeum, anterior and posterior midguts, splanchnopleura, salivary gland placode and adjacent to the segmentally repeated tracheal placodes (at protein level). During and after germ band shortening, localized in a number of cell types, including the salivary gland, foregut, hindgut, Malpighian tubules and epidermis (at protein level). In embryos, high expression in M13 with comparatively low expression in M12.

Its subcellular location is the cell membrane. It localises to the cytoplasm. Its function is as follows. Receptor for the cleaved activated form of spz, spaetzle C-106. Binding to spaetzle C-106 activates the Toll signaling pathway and induces expression of the antifungal peptide drosomycin. Component of the extracellular signaling pathway that establishes dorsal-ventral polarity in the embryo. Promotes heterophilic cellular adhesion. Involved in synaptic targeting of motoneurons RP5 and V to muscle 12 (M12); functions as a repulsive cue inhibiting motoneuron synapse formation on muscle 13 (M13) to guide RP5 and V to the neighboring M12, where its expression is repressed by tey. May also function in embryonic neuronal survival and the synaptic targeting of SNa motoneurons. The chain is Protein toll from Drosophila melanogaster (Fruit fly).